A 241-amino-acid polypeptide reads, in one-letter code: Acyl-protein thioesterase 1 (241 aa).

Residues Ser-122, Asp-178, and His-211 each act as charge relay system in the active site.

It belongs to the AB hydrolase superfamily. AB hydrolase 2 family.

It localises to the cytoplasm. Its subcellular location is the nucleus. It catalyses the reaction S-hexadecanoyl-L-cysteinyl-[protein] + H2O = L-cysteinyl-[protein] + hexadecanoate + H(+). In terms of biological role, hydrolyzes fatty acids from S-acylated cysteine residues in proteins with a strong preference for palmitoylated G-alpha proteins over other acyl substrates. Mediates the deacylation of G-alpha proteins such as GPA1 in vivo, but has weak or no activity toward palmitoylated Ras proteins. Has weak lysophospholipase activity in vitro; however such activity may not exist in vivo. The protein is Acyl-protein thioesterase 1 of Aspergillus fumigatus (strain ATCC MYA-4609 / CBS 101355 / FGSC A1100 / Af293) (Neosartorya fumigata).